The sequence spans 51 residues: Lantibiotic flavucin (51 aa).

Positions 1–20 (MSDFTLDFAEGDAADTVSPQ) are excised as a propeptide. Positions 23 to 27 (SKSLC) form a cross-link, lanthionine (Ser-Cys). 3 consecutive cross-links (beta-methyllanthionine (Thr-Cys)) follow at residues 28–31 (TPGC), 33–38 (TGWMMC), and 42–45 (TKGC).

It belongs to the type A lantibiotic family. Post-translationally, maturation of lantibiotics involves the enzymatic conversion of Thr, and Ser into dehydrated AA and the formation of thioether bonds with cysteine. This is followed by membrane translocation and cleavage of the modified precursor.

Its activity is regulated as follows. Antimicrobial activity depends on the dehydration degree and integrity of flavucin. In terms of biological role, lanthionine-containing peptide antibiotic (lantibiotic) active on certain Gram-positive bacteria. The bactericidal activity of lantibiotics is based on depolarization of energized bacterial cytoplasmic membranes, initiated by the formation of aqueous transmembrane pores. Flavucin has high antimicrobial activity against several pathogenic bacteria such as S.aureus, E.faecalis, E.faecium and L.monocytogenes. Is also active against the Gram-negative P.aeruginosa. The protein is Lantibiotic flavucin of Corynebacterium lipophiloflavum (strain ATCC 700352 / DSM 44291 / CCUG 37336 / JCM 10383 / DMMZ 1944).